Reading from the N-terminus, the 205-residue chain is MTNILWHQHPVDQAARAEQKGQNPVLLWFTGLSGAGKSTLAGALERALFEAGFHTYLLDGDNVRHGLCKDLGFTVEDRDENLRRVGEVAKLMVDAGLVVLSAFISPTREERDSIRARFPTSQFIEVHVSTPLSVCEQRDPKGLYVKARSGEISNFTGISSPYEAPLAAELTIDTSKGDLATQVRALIDYLTAINVINADKAKALA.

31–38 (GLSGAGKS) contacts ATP. Serine 105 (phosphoserine intermediate) is an active-site residue.

This sequence belongs to the APS kinase family.

It catalyses the reaction adenosine 5'-phosphosulfate + ATP = 3'-phosphoadenylyl sulfate + ADP + H(+). It functions in the pathway sulfur metabolism; hydrogen sulfide biosynthesis; sulfite from sulfate: step 2/3. Its function is as follows. Catalyzes the synthesis of activated sulfate. The polypeptide is Adenylyl-sulfate kinase (Shewanella baltica (strain OS155 / ATCC BAA-1091)).